A 499-amino-acid polypeptide reads, in one-letter code: Thioredoxin reductase 1, cytoplasmic (499 aa).

Residues 22-23 (SG), 42-43 (DF), 58-59 (TC), and 63-67 (SCIPK) each bind FAD. The cysteines at positions 59 and 64 are disulfide-linked. Lys68 carries the post-translational modification N6-succinyllysine. Tyr131 carries the phosphotyrosine modification. FAD contacts are provided by residues 131–132 (YG) and Thr161. NADP(+) is bound by residues Arg166, 198–204 (ASYVALE), 221–222 (RS), Arg226, 226–228 (RGF), 292–293 (GR), and Lys315. Tyr200 lines the FAD pocket. Residues Asp334, 341–343 (ELT), and His472 contribute to the FAD site. Glu341 is an NADP(+) binding site. The active-site Proton acceptor is the His472. Positions 497–498 (CU) form a cross-link, cysteinyl-selenocysteine (Cys-Sec). A non-standard amino acid (selenocysteine) is located at residue Sec498.

This sequence belongs to the class-I pyridine nucleotide-disulfide oxidoreductase family. As to quaternary structure, homodimer. It depends on FAD as a cofactor. In terms of processing, ISGylated.

It is found in the cytoplasm. The catalysed reaction is [thioredoxin]-dithiol + NADP(+) = [thioredoxin]-disulfide + NADPH + H(+). It catalyses the reaction H2O2 + NADPH + H(+) = NADP(+) + 2 H2O. Functionally, reduces disulfideprotein thioredoxin (Trx) to its dithiol-containing form. Homodimeric flavoprotein involved in the regulation of cellular redox reactions, growth and differentiation. Contains a selenocysteine residue at the C-terminal active site that is essential for catalysis. Also has reductase activity on hydrogen peroxide (H2O2). This is Thioredoxin reductase 1, cytoplasmic (TXNRD1) from Sus scrofa (Pig).